Here is a 511-residue protein sequence, read N- to C-terminus: Ribonuclease Y (511 aa).

Residues 2–22 traverse the membrane as a helical segment; it reads ITTVIIAIVCFAVGGGLSYML. A KH domain is found at 201-261; it reads SVTVFHIESD…VRREIARLAL (61 aa). Positions 327 to 420 constitute an HD domain; the sequence is LLQHARETAN…VQVCDAISGA (94 aa).

Belongs to the RNase Y family.

It is found in the cell membrane. In terms of biological role, endoribonuclease that initiates mRNA decay. In Phocaeicola vulgatus (strain ATCC 8482 / DSM 1447 / JCM 5826 / CCUG 4940 / NBRC 14291 / NCTC 11154) (Bacteroides vulgatus), this protein is Ribonuclease Y.